Here is a 77-residue protein sequence, read N- to C-terminus: UPF0154 protein LCK_00994 (77 aa).

Residues 5-25 (FGILIFVLGLVIGLVIGFFVA) traverse the membrane as a helical segment. Residues 50–77 (SMGQKPSQKKLNQMMAQMKQQSEQSQKK) are disordered.

This sequence belongs to the UPF0154 family.

The protein localises to the cell membrane. The protein is UPF0154 protein LCK_00994 of Leuconostoc citreum (strain KM20).